The chain runs to 150 residues: MKSKRHTKILEIISSKEIETQEDLAEELKLQGFDVTQATVSRDIKNLKLIKIQGASGNYKYVVSSGEEKNIIDRLSNILSNTVISAENVDKMVVIKTISGSGSAAAEAIDNLEGSDVAGTVAGDNTIFILLRSLEKAEELVAKIRKRISL.

It belongs to the ArgR family.

The protein localises to the cytoplasm. It participates in amino-acid biosynthesis; L-arginine biosynthesis [regulation]. Regulates arginine biosynthesis genes. This Clostridium botulinum (strain Eklund 17B / Type B) protein is Arginine repressor.